Reading from the N-terminus, the 394-residue chain is SVGFKAGVKDYRLTYYTPEYETLATDILAAFRVTPQPGVPPEEAGAAVAAESSTGTWTTVWTDGLTSLDRYKGRCYHIEPVAGEENQYIAYVAYPLDLFEEGSVTNMFTSIVGNVFGFKALRALRLEDLRIPPAYSKTFQGPPHGIQVERDKLNKYGRPLLGCTIKPKLGLSAKNYGRAVYECLRGGLDFTKDDENVNSQPFMRWRDRFLFCAEALYKAQAETGEIKGHYLNATAGTSEEMIKRAVCARELGVPIVMHDYLTGGFTANTSLAHYCRDNGLLLHIHRAMHAVIDRQRNHGIHFRVLAKALRMSGGDHIHSGTVVGKLEGERDVTLGFVDLLRDDFIEKDRSRGIYFTQDWVSMPGVLPVASGGIHVWHMPALTEIFGDDSVLQFG.

N6,N6,N6-trimethyllysine is present on Lys-5. Substrate-binding residues include Asn-114 and Thr-164. Catalysis depends on Lys-166, which acts as the Proton acceptor. Lys-168 lines the substrate pocket. Positions 192, 194, and 195 each coordinate Mg(2+). Lys-192 is modified (N6-carboxylysine). His-285 serves as the catalytic Proton acceptor. Substrate contacts are provided by Arg-286, His-318, and Ser-370.

Belongs to the RuBisCO large chain family. Type I subfamily. As to quaternary structure, heterohexadecamer of 8 large chains and 8 small chains. It depends on Mg(2+) as a cofactor.

The protein resides in the plastid. It localises to the chloroplast. It catalyses the reaction 2 (2R)-3-phosphoglycerate + 2 H(+) = D-ribulose 1,5-bisphosphate + CO2 + H2O. It carries out the reaction D-ribulose 1,5-bisphosphate + O2 = 2-phosphoglycolate + (2R)-3-phosphoglycerate + 2 H(+). Its function is as follows. RuBisCO catalyzes two reactions: the carboxylation of D-ribulose 1,5-bisphosphate, the primary event in carbon dioxide fixation, as well as the oxidative fragmentation of the pentose substrate in the photorespiration process. Both reactions occur simultaneously and in competition at the same active site. This Nymphaea odorata (White water lily) protein is Ribulose bisphosphate carboxylase large chain (rbcL).